Here is a 228-residue protein sequence, read N- to C-terminus: 5'-methylthioadenosine/S-adenosylhomocysteine nucleosidase (228 aa).

Residue Glu11 is the Proton acceptor of the active site. Residues Gly77, Ile151, and 172 to 173 contribute to the substrate site; that span reads ME. The Proton donor role is filled by Asp196.

Belongs to the PNP/UDP phosphorylase family. MtnN subfamily.

The enzyme catalyses S-adenosyl-L-homocysteine + H2O = S-(5-deoxy-D-ribos-5-yl)-L-homocysteine + adenine. It carries out the reaction S-methyl-5'-thioadenosine + H2O = 5-(methylsulfanyl)-D-ribose + adenine. It catalyses the reaction 5'-deoxyadenosine + H2O = 5-deoxy-D-ribose + adenine. It participates in amino-acid biosynthesis; L-methionine biosynthesis via salvage pathway; S-methyl-5-thio-alpha-D-ribose 1-phosphate from S-methyl-5'-thioadenosine (hydrolase route): step 1/2. Its function is as follows. Catalyzes the irreversible cleavage of the glycosidic bond in both 5'-methylthioadenosine (MTA) and S-adenosylhomocysteine (SAH/AdoHcy) to adenine and the corresponding thioribose, 5'-methylthioribose and S-ribosylhomocysteine, respectively. Also cleaves 5'-deoxyadenosine, a toxic by-product of radical S-adenosylmethionine (SAM) enzymes, into 5-deoxyribose and adenine. This is 5'-methylthioadenosine/S-adenosylhomocysteine nucleosidase from Staphylococcus carnosus (strain TM300).